Consider the following 377-residue polypeptide: tRNA-specific 2-thiouridylase MnmA (377 aa).

Residues 8-15 and Met-34 each bind ATP; that span reads GMSGGVDS. Residues 94 to 96 are interaction with target base in tRNA; that stretch reads NPD. The active-site Nucleophile is the Cys-99. A disulfide bond links Cys-99 and Cys-201. ATP is bound at residue Gly-123. The tract at residues 151 to 153 is interaction with tRNA; the sequence is KDQ. Cys-201 acts as the Cysteine persulfide intermediate in catalysis. Residues 315 to 316 are interaction with tRNA; it reads RY.

This sequence belongs to the MnmA/TRMU family.

The protein resides in the cytoplasm. The enzyme catalyses S-sulfanyl-L-cysteinyl-[protein] + uridine(34) in tRNA + AH2 + ATP = 2-thiouridine(34) in tRNA + L-cysteinyl-[protein] + A + AMP + diphosphate + H(+). Functionally, catalyzes the 2-thiolation of uridine at the wobble position (U34) of tRNA, leading to the formation of s(2)U34. The protein is tRNA-specific 2-thiouridylase MnmA of Acinetobacter baylyi (strain ATCC 33305 / BD413 / ADP1).